We begin with the raw amino-acid sequence, 241 residues long: Uridylate kinase (241 aa).

ATP is bound at residue 15–18 (KLSG). Residue glycine 57 participates in UMP binding. Residues glycine 58 and arginine 62 each contribute to the ATP site. Residues aspartate 77 and 139 to 146 (IGHTLFTT) contribute to the UMP site. 4 residues coordinate ATP: threonine 166, asparagine 167, phenylalanine 172, and aspartate 175.

Belongs to the UMP kinase family. In terms of assembly, homohexamer.

It is found in the cytoplasm. The enzyme catalyses UMP + ATP = UDP + ADP. Its pathway is pyrimidine metabolism; CTP biosynthesis via de novo pathway; UDP from UMP (UMPK route): step 1/1. With respect to regulation, inhibited by UTP. Catalyzes the reversible phosphorylation of UMP to UDP. This Wigglesworthia glossinidia brevipalpis protein is Uridylate kinase.